Here is a 211-residue protein sequence, read N- to C-terminus: Prolactin (211 aa).

Residues 1–24 (MTHRRTKLFMMAAVVSYVMTSCGA) form the signal peptide. Cystine bridges form between cysteine 70–cysteine 184 and cysteine 201–cysteine 211.

It belongs to the somatotropin/prolactin family.

It is found in the secreted. This is Prolactin (prl) from Paralichthys olivaceus (Bastard halibut).